Here is a 365-residue protein sequence, read N- to C-terminus: MKGKTLLAGCIALSLSHMAFADDIKVAVVGAMSGPVAQYGDQEFTGAEQAIADINAKGGIKGDKLVAVKYDDACDPKQAVAVANKVVNDGIKYVIGHLCSSSTQPASDIYEDEGILMITPAATAPELTARGYKLVLRTTGLDSDQGPTAAKYILEKVKPQRIAIIHDKQQYGEGLARAVQDGLKKGGVNVVFFDGITAGEKDFSTLVARLKKENIDFVYYGGYHPEMGQILRQSRAAGLKTQFMGPEGVANVSLSNIAGESAEGLLVTKPKNYDQVPANKPIVDAIKAKKQDPSGAFVWTTYAALQSLQAGLNHSDDPAEIAKYLKGATVDTVMGPLSWDEKGDLKGFEFGVFDWHANGTATDAK.

The signal sequence occupies residues 1–21 (MKGKTLLAGCIALSLSHMAFA). A disulfide bond links Cys74 and Cys99.

This sequence belongs to the leucine-binding protein family.

The protein resides in the periplasm. In terms of biological role, this protein is a component of the leucine, isoleucine, valine, threonine transport system, which is one of the two periplasmic binding protein-dependent transport systems of the high-affinity transport of the branched-chain amino acids. The protein is Leu/Ile/Val/Thr-binding protein (livJ) of Salmonella typhimurium (strain LT2 / SGSC1412 / ATCC 700720).